We begin with the raw amino-acid sequence, 59 residues long: UPF0434 protein Shew185_1670 (59 aa).

This sequence belongs to the UPF0434 family.

This Shewanella baltica (strain OS185) protein is UPF0434 protein Shew185_1670.